A 509-amino-acid polypeptide reads, in one-letter code: 2,3-bisphosphoglycerate-independent phosphoglycerate mutase (509 aa).

Residues D13 and S63 each coordinate Mn(2+). S63 acts as the Phosphoserine intermediate in catalysis. Residues H124, 154–155 (RD), R186, R192, 261–264 (RPDR), and K335 contribute to the substrate site. Residues D400, H404, D441, H442, and H459 each contribute to the Mn(2+) site.

This sequence belongs to the BPG-independent phosphoglycerate mutase family. As to quaternary structure, monomer. It depends on Mn(2+) as a cofactor.

It catalyses the reaction (2R)-2-phosphoglycerate = (2R)-3-phosphoglycerate. Its pathway is carbohydrate degradation; glycolysis; pyruvate from D-glyceraldehyde 3-phosphate: step 3/5. In terms of biological role, catalyzes the interconversion of 2-phosphoglycerate and 3-phosphoglycerate. This is 2,3-bisphosphoglycerate-independent phosphoglycerate mutase from Desulforudis audaxviator (strain MP104C).